The primary structure comprises 880 residues: Leucine--tRNA ligase (880 aa).

Residues 46-56 carry the 'HIGH' region motif; the sequence is PYPSGALHMGH. A 'KMSKS' region motif is present at residues 638–642; the sequence is KMSKS. ATP is bound at residue Lys641.

It belongs to the class-I aminoacyl-tRNA synthetase family.

The protein resides in the cytoplasm. It catalyses the reaction tRNA(Leu) + L-leucine + ATP = L-leucyl-tRNA(Leu) + AMP + diphosphate. The chain is Leucine--tRNA ligase from Xanthomonas oryzae pv. oryzae (strain KACC10331 / KXO85).